The primary structure comprises 345 residues: Anthranilate phosphoribosyltransferase (345 aa).

5-phospho-alpha-D-ribose 1-diphosphate-binding positions include glycine 75, 78 to 79 (GD), serine 83, 85 to 88 (NIST), 103 to 111 (KHGNRAASS), and glycine 115. Glycine 75 lines the anthranilate pocket. Serine 87 contributes to the Mg(2+) binding site. Residue asparagine 106 participates in anthranilate binding. Arginine 161 serves as a coordination point for anthranilate. Residues aspartate 219 and glutamate 220 each contribute to the Mg(2+) site.

Belongs to the anthranilate phosphoribosyltransferase family. As to quaternary structure, homodimer. The cofactor is Mg(2+).

It catalyses the reaction N-(5-phospho-beta-D-ribosyl)anthranilate + diphosphate = 5-phospho-alpha-D-ribose 1-diphosphate + anthranilate. The protein operates within amino-acid biosynthesis; L-tryptophan biosynthesis; L-tryptophan from chorismate: step 2/5. Catalyzes the transfer of the phosphoribosyl group of 5-phosphorylribose-1-pyrophosphate (PRPP) to anthranilate to yield N-(5'-phosphoribosyl)-anthranilate (PRA). This Nocardia farcinica (strain IFM 10152) protein is Anthranilate phosphoribosyltransferase.